A 170-amino-acid chain; its full sequence is Bifunctional protein PyrR (170 aa).

The PRPP-binding signature appears at 90-102; sequence LVLIDDVLMSGRT.

This sequence belongs to the purine/pyrimidine phosphoribosyltransferase family. PyrR subfamily.

The enzyme catalyses UMP + diphosphate = 5-phospho-alpha-D-ribose 1-diphosphate + uracil. In terms of biological role, regulates the transcription of the pyrimidine nucleotide (pyr) operon in response to exogenous pyrimidines. Functionally, also displays a weak uracil phosphoribosyltransferase activity which is not physiologically significant. In Pseudomonas syringae pv. syringae (strain B728a), this protein is Bifunctional protein PyrR.